The following is a 202-amino-acid chain: LexA repressor 2 (202 aa).

Positions 28 to 48 (LADIATRFGFASRSVARKHIT) form a DNA-binding region, H-T-H motif. Catalysis depends on for autocatalytic cleavage activity residues Ser123 and Lys160.

The protein belongs to the peptidase S24 family. As to quaternary structure, homodimer.

The catalysed reaction is Hydrolysis of Ala-|-Gly bond in repressor LexA.. In terms of biological role, represses a number of genes involved in the response to DNA damage (SOS response), including recA and lexA. In the presence of single-stranded DNA, RecA interacts with LexA causing an autocatalytic cleavage which disrupts the DNA-binding part of LexA, leading to derepression of the SOS regulon and eventually DNA repair. In Pseudomonas putida (strain ATCC 47054 / DSM 6125 / CFBP 8728 / NCIMB 11950 / KT2440), this protein is LexA repressor 2.